The primary structure comprises 394 residues: Phosphoglycerate kinase (394 aa).

Residues 21–23 (DFN), Arg-36, 59–62 (HLGR), Arg-118, and Arg-151 each bind substrate. Ser-183 carries the post-translational modification Phosphoserine. Residues Lys-201 and Gly-292 each contribute to the ATP site. Thr-299 is modified (phosphothreonine). ATP is bound by residues Glu-323 and 350–353 (GGDS).

This sequence belongs to the phosphoglycerate kinase family. Monomer.

It is found in the cytoplasm. The catalysed reaction is (2R)-3-phosphoglycerate + ATP = (2R)-3-phospho-glyceroyl phosphate + ADP. It participates in carbohydrate degradation; glycolysis; pyruvate from D-glyceraldehyde 3-phosphate: step 2/5. The sequence is that of Phosphoglycerate kinase from Bacillus cereus (strain ZK / E33L).